Reading from the N-terminus, the 128-residue chain is MPREFFRSDRIADAIQRSLARVIQTEVRDPRLGLVNINSVDVTRDLSIAKVYVTVVGAKEESESEVAVKVLNKAAGFLRNVIAKELTMRSAPRLSFFYDRTAVQGQNLSNLIDRAVAADKQRSEDEGE.

This sequence belongs to the RbfA family. In terms of assembly, monomer. Binds 30S ribosomal subunits, but not 50S ribosomal subunits or 70S ribosomes.

The protein resides in the cytoplasm. In terms of biological role, one of several proteins that assist in the late maturation steps of the functional core of the 30S ribosomal subunit. Associates with free 30S ribosomal subunits (but not with 30S subunits that are part of 70S ribosomes or polysomes). Required for efficient processing of 16S rRNA. May interact with the 5'-terminal helix region of 16S rRNA. This Saccharophagus degradans (strain 2-40 / ATCC 43961 / DSM 17024) protein is Ribosome-binding factor A.